The primary structure comprises 160 residues: SsrA-binding protein (160 aa).

The tract at residues 136 to 160 (KRDTMRERDSNRELQRAVRNKGKED) is disordered.

It belongs to the SmpB family.

It is found in the cytoplasm. Required for rescue of stalled ribosomes mediated by trans-translation. Binds to transfer-messenger RNA (tmRNA), required for stable association of tmRNA with ribosomes. tmRNA and SmpB together mimic tRNA shape, replacing the anticodon stem-loop with SmpB. tmRNA is encoded by the ssrA gene; the 2 termini fold to resemble tRNA(Ala) and it encodes a 'tag peptide', a short internal open reading frame. During trans-translation Ala-aminoacylated tmRNA acts like a tRNA, entering the A-site of stalled ribosomes, displacing the stalled mRNA. The ribosome then switches to translate the ORF on the tmRNA; the nascent peptide is terminated with the 'tag peptide' encoded by the tmRNA and targeted for degradation. The ribosome is freed to recommence translation, which seems to be the essential function of trans-translation. The chain is SsrA-binding protein from Pseudomonas putida (strain GB-1).